We begin with the raw amino-acid sequence, 301 residues long: GTPase Era (301 aa).

In terms of domain architecture, Era-type G spans lysine 4 to proline 173. Residues glycine 12–serine 19 are G1. Glycine 12–serine 19 lines the GTP pocket. Residues asparagine 38–lysine 42 are G2. The G3 stretch occupies residues aspartate 64–glycine 67. GTP is bound by residues aspartate 64–leucine 68 and serine 122–aspartate 125. The interval serine 122 to aspartate 125 is G4. The G5 stretch occupies residues leucine 152–alanine 154. The KH type-2 domain maps to leucine 204–lysine 280.

This sequence belongs to the TRAFAC class TrmE-Era-EngA-EngB-Septin-like GTPase superfamily. Era GTPase family. As to quaternary structure, monomer.

It is found in the cytoplasm. It localises to the cell inner membrane. In terms of biological role, an essential GTPase that binds both GDP and GTP, with rapid nucleotide exchange. Plays a role in 16S rRNA processing and 30S ribosomal subunit biogenesis and possibly also in cell cycle regulation and energy metabolism. In Helicobacter pylori (strain P12), this protein is GTPase Era.